We begin with the raw amino-acid sequence, 408 residues long: Imidazolonepropionase (408 aa).

Fe(3+) is bound by residues His73 and His75. Residues His73 and His75 each contribute to the Zn(2+) site. 4-imidazolone-5-propanoate-binding residues include Arg82, Tyr145, and His178. Tyr145 serves as a coordination point for N-formimidoyl-L-glutamate. His243 contacts Fe(3+). His243 provides a ligand contact to Zn(2+). Gln246 is a binding site for 4-imidazolone-5-propanoate. Asp318 is a Fe(3+) binding site. Asp318 contacts Zn(2+). N-formimidoyl-L-glutamate-binding residues include Asn320 and Gly322. Ser323 serves as a coordination point for 4-imidazolone-5-propanoate.

This sequence belongs to the metallo-dependent hydrolases superfamily. HutI family. The cofactor is Zn(2+). Fe(3+) serves as cofactor.

The protein localises to the cytoplasm. It catalyses the reaction 4-imidazolone-5-propanoate + H2O = N-formimidoyl-L-glutamate. The protein operates within amino-acid degradation; L-histidine degradation into L-glutamate; N-formimidoyl-L-glutamate from L-histidine: step 3/3. In terms of biological role, catalyzes the hydrolytic cleavage of the carbon-nitrogen bond in imidazolone-5-propanoate to yield N-formimidoyl-L-glutamate. It is the third step in the universal histidine degradation pathway. This Shewanella sp. (strain ANA-3) protein is Imidazolonepropionase.